The primary structure comprises 297 residues: Aspartate carbamoyltransferase catalytic subunit (297 aa).

Arg51 and Thr52 together coordinate carbamoyl phosphate. Lys79 contributes to the L-aspartate binding site. Carbamoyl phosphate contacts are provided by Arg101, His129, and Gln132. Residues Arg162 and Arg216 each coordinate L-aspartate. Carbamoyl phosphate contacts are provided by Gly257 and Pro258.

Belongs to the aspartate/ornithine carbamoyltransferase superfamily. ATCase family. In terms of assembly, heterododecamer (2C3:3R2) of six catalytic PyrB chains organized as two trimers (C3), and six regulatory PyrI chains organized as three dimers (R2).

The enzyme catalyses carbamoyl phosphate + L-aspartate = N-carbamoyl-L-aspartate + phosphate + H(+). The protein operates within pyrimidine metabolism; UMP biosynthesis via de novo pathway; (S)-dihydroorotate from bicarbonate: step 2/3. Its function is as follows. Catalyzes the condensation of carbamoyl phosphate and aspartate to form carbamoyl aspartate and inorganic phosphate, the committed step in the de novo pyrimidine nucleotide biosynthesis pathway. In Myxococcus xanthus (strain DK1622), this protein is Aspartate carbamoyltransferase catalytic subunit.